Here is an 83-residue protein sequence, read N- to C-terminus: Protein FAM240A (83 aa).

This sequence belongs to the FAM240 family.

The polypeptide is Protein FAM240A (Homo sapiens (Human)).